A 453-amino-acid chain; its full sequence is Dibenzothiophene-sulfone monooxygenase (453 aa).

Residues Asp-59, Thr-106, His-156, Tyr-160, and Ser-231 each coordinate FMN.

The protein belongs to the NtaA/SnaA/DszA monooxygenase family. Homodimer.

It localises to the cytoplasm. The catalysed reaction is dibenzothiophene 5,5-dioxide + FMNH2 + NADH + O2 = 2'-hydroxybiphenyl-2-sulfinate + FMN + NAD(+) + H2O + H(+). It participates in sulfur metabolism; dibenzothiophene degradation. Its function is as follows. Catalyzes the second step of the '4S' desulfurization pathway that removes covalently bound sulfur from dibenzothiophene (DBT) without breaking carbon-carbon bonds. Metabolizes DBT-sulfone (DBTO2 or DBT 5,5-dioxide) to 2-(2'-hydroxyphenyl)benzene sulphinate (HBPS). The protein is Dibenzothiophene-sulfone monooxygenase of Rhodococcus erythropolis (strain XP).